Here is a 681-residue protein sequence, read N- to C-terminus: Pescadillo homolog (681 aa).

In terms of domain architecture, BRCT spans 350–469; it reads TAGALFAPFT…KLLRPDLYAP (120 aa). Residues 489-681 are disordered; sequence DPRASLAEQE…RRKLEKGAEK (193 aa). Residues 491 to 527 adopt a coiled-coil conformation; that stretch reads RASLAEQEEEGEAEIAAEEEEEDSDEEMEEATDGKKV. Positions 496 to 521 are enriched in acidic residues; sequence EQEEEGEAEIAAEEEEEDSDEEMEEA. A compositionally biased stretch (basic and acidic residues) spans 522 to 533; it reads TDGKKVDAKAED. 2 stretches are compositionally biased toward acidic residues: residues 534 to 546 and 554 to 586; these read SAEEENEDEDDSV and GTDDDEDESEEEMEDEFGGFEEEAASESEDEEE. Residues 574 to 681 are a coiled coil; it reads EEEAASESED…RRKLEKGAEK (108 aa). Basic and acidic residues predominate over residues 587-597; the sequence is SARTQHQKELE. The segment covering 617–629 has biased composition (basic residues); the sequence is KKSSQAKKVASKK. A compositionally biased stretch (basic and acidic residues) spans 630–640; sequence RKEEEELERQK.

It belongs to the pescadillo family. In terms of assembly, component of the NOP7 complex, composed of erb1, nop7 and ytm1. The complex is held together by erb1, which interacts with nop7 via its N-terminal domain and with ytm1 via a high-affinity interaction between the seven-bladed beta-propeller domains of the 2 proteins. The NOP7 complex associates with the 66S pre-ribosome.

Its subcellular location is the nucleus. The protein resides in the nucleolus. It localises to the nucleoplasm. In terms of biological role, component of the NOP7 complex, which is required for maturation of the 25S and 5.8S ribosomal RNAs and formation of the 60S ribosome. This chain is Pescadillo homolog (nop7), found in Aspergillus oryzae (strain ATCC 42149 / RIB 40) (Yellow koji mold).